The sequence spans 273 residues: 2,3,4,5-tetrahydropyridine-2,6-dicarboxylate N-succinyltransferase (273 aa).

Substrate-binding residues include arginine 104 and aspartate 141.

This sequence belongs to the transferase hexapeptide repeat family. Homotrimer.

It is found in the cytoplasm. It carries out the reaction (S)-2,3,4,5-tetrahydrodipicolinate + succinyl-CoA + H2O = (S)-2-succinylamino-6-oxoheptanedioate + CoA. It functions in the pathway amino-acid biosynthesis; L-lysine biosynthesis via DAP pathway; LL-2,6-diaminopimelate from (S)-tetrahydrodipicolinate (succinylase route): step 1/3. This chain is 2,3,4,5-tetrahydropyridine-2,6-dicarboxylate N-succinyltransferase, found in Azoarcus sp. (strain BH72).